A 660-amino-acid chain; its full sequence is tRNA 5-methylaminomethyl-2-thiouridine biosynthesis bifunctional protein MnmC (660 aa).

A tRNA (mnm(5)s(2)U34)-methyltransferase region spans residues 1 to 242 (MTDRIVPATL…KRAMLVGEFA (242 aa)). The interval 266–660 (IGAGLAGCAV…VRALRHGRVA (395 aa)) is FAD-dependent cmnm(5)s(2)U34 oxidoreductase.

This sequence in the N-terminal section; belongs to the methyltransferase superfamily. tRNA (mnm(5)s(2)U34)-methyltransferase family. It in the C-terminal section; belongs to the DAO family. The cofactor is FAD.

It is found in the cytoplasm. It catalyses the reaction 5-aminomethyl-2-thiouridine(34) in tRNA + S-adenosyl-L-methionine = 5-methylaminomethyl-2-thiouridine(34) in tRNA + S-adenosyl-L-homocysteine + H(+). Functionally, catalyzes the last two steps in the biosynthesis of 5-methylaminomethyl-2-thiouridine (mnm(5)s(2)U) at the wobble position (U34) in tRNA. Catalyzes the FAD-dependent demodification of cmnm(5)s(2)U34 to nm(5)s(2)U34, followed by the transfer of a methyl group from S-adenosyl-L-methionine to nm(5)s(2)U34, to form mnm(5)s(2)U34. The chain is tRNA 5-methylaminomethyl-2-thiouridine biosynthesis bifunctional protein MnmC from Burkholderia mallei (strain NCTC 10247).